Here is a 383-residue protein sequence, read N- to C-terminus: MPYVDRQNRICGFLDIEENENSGKFLRRYFILDTREDSFVWYMDNPQNLPSGSSRVGAIKLTYISKVSDATKLRPKAEFCFVMNAGMRKYFLQANDQQDLVEWVNVLNKAIKITVPKQSDSQPASDSLSRQGDCGKKQVSYRTDIVGGVPIITPTQKEEVNECGESLDRNNLKRSQSHLPYFAPKPPSDSAVIKAGYCVKQGAVMKNWKRRYFQLDENTIGYFKSELEKEPLRVIPLKEVHKVQECKQSDIMMRDNLFEIVTTSRTFYVQADSPEEMHSWIKAVSGAIVAQRGPGRSSSSMRQARRLSNPCIQRSIPAGLQNPNSLSVLPGPQPPPHIPQPLAATLWSQAVPWRSEEFTNLLPRSSQGTSRSRLSLQESQLPK.

2 consecutive PH domains span residues 7–112 and 191–289; these read QNRI…KAIK and AVIK…GAIV. Val284 is subject to Phosphoserine. Residues 362 to 383 are disordered; the sequence is LPRSSQGTSRSRLSLQESQLPK. Over residues 370-383 the composition is skewed to low complexity; it reads SRSRLSLQESQLPK.

In terms of assembly, interacts with MPDZ and PTPN13.

It is found in the cytoplasm. The protein localises to the cell membrane. The protein resides in the nucleus. Binds specifically to phosphatidylinositol 3,4-diphosphate (PtdIns3,4P2), but not to other phosphoinositides. May recruit other proteins to the plasma membrane. This is Pleckstrin homology domain-containing family A member 1 (Plekha1) from Mus musculus (Mouse).